A 206-amino-acid chain; its full sequence is Large ribosomal subunit protein uL4 (206 aa).

The disordered stretch occupies residues 47-71 (TRAQKGRSEVAGSTRKQWRQKGTGR).

This sequence belongs to the universal ribosomal protein uL4 family. As to quaternary structure, part of the 50S ribosomal subunit.

Functionally, one of the primary rRNA binding proteins, this protein initially binds near the 5'-end of the 23S rRNA. It is important during the early stages of 50S assembly. It makes multiple contacts with different domains of the 23S rRNA in the assembled 50S subunit and ribosome. Forms part of the polypeptide exit tunnel. In Nitrosomonas eutropha (strain DSM 101675 / C91 / Nm57), this protein is Large ribosomal subunit protein uL4.